The chain runs to 577 residues: Urease subunit alpha (577 aa).

A Urease domain is found at 136 to 577 (GGIDCHVHFI…LPMAQRYFLF (442 aa)). Ni(2+) is bound by residues histidine 141, histidine 143, and lysine 224. An N6-carboxylysine modification is found at lysine 224. Histidine 226 is a binding site for substrate. Residues histidine 253 and histidine 279 each coordinate Ni(2+). The active-site Proton donor is the histidine 327. Aspartate 367 is a Ni(2+) binding site.

This sequence belongs to the metallo-dependent hydrolases superfamily. Urease alpha subunit family. As to quaternary structure, heterotrimer of UreA (gamma), UreB (beta) and UreC (alpha) subunits. Three heterotrimers associate to form the active enzyme. Requires Ni cation as cofactor. Post-translationally, carboxylation allows a single lysine to coordinate two nickel ions.

Its subcellular location is the cytoplasm. It catalyses the reaction urea + 2 H2O + H(+) = hydrogencarbonate + 2 NH4(+). It participates in nitrogen metabolism; urea degradation; CO(2) and NH(3) from urea (urease route): step 1/1. The polypeptide is Urease subunit alpha (Mycobacteroides abscessus (strain ATCC 19977 / DSM 44196 / CCUG 20993 / CIP 104536 / JCM 13569 / NCTC 13031 / TMC 1543 / L948) (Mycobacterium abscessus)).